A 544-amino-acid chain; its full sequence is Dynein axonemal assembly factor 3 (544 aa).

Disordered stretches follow at residues 328-350 and 448-544; these read RAAE…PAAP and TFAR…YPIP. Residues 522-536 are compositionally biased toward polar residues; it reads PTGSQAPKSENQTVP.

This sequence belongs to the DNAAF3 family.

Its subcellular location is the cytoplasm. It is found in the dynein axonemal particle. In terms of biological role, required for the assembly of axonemal inner and outer dynein arms. Involved in preassembly of dyneins into complexes before their transport into cilia. This Bos taurus (Bovine) protein is Dynein axonemal assembly factor 3 (DNAAF3).